A 632-amino-acid polypeptide reads, in one-letter code: DNA gyrase subunit B (632 aa).

The region spanning 419–533 (RELFIVEGES…SGYLYIAQPP (115 aa)) is the Toprim domain. Mg(2+)-binding residues include Glu425, Asp498, and Asp500.

The protein belongs to the type II topoisomerase GyrB family. Heterotetramer, composed of two GyrA and two GyrB chains. In the heterotetramer, GyrA contains the active site tyrosine that forms a transient covalent intermediate with DNA, while GyrB binds cofactors and catalyzes ATP hydrolysis. Mg(2+) is required as a cofactor. The cofactor is Mn(2+). Requires Ca(2+) as cofactor.

It localises to the cytoplasm. It catalyses the reaction ATP-dependent breakage, passage and rejoining of double-stranded DNA.. A type II topoisomerase that negatively supercoils closed circular double-stranded (ds) DNA in an ATP-dependent manner to modulate DNA topology and maintain chromosomes in an underwound state. Negative supercoiling favors strand separation, and DNA replication, transcription, recombination and repair, all of which involve strand separation. Also able to catalyze the interconversion of other topological isomers of dsDNA rings, including catenanes and knotted rings. Type II topoisomerases break and join 2 DNA strands simultaneously in an ATP-dependent manner. This chain is DNA gyrase subunit B, found in Archaeoglobus fulgidus (strain ATCC 49558 / DSM 4304 / JCM 9628 / NBRC 100126 / VC-16).